The following is a 983-amino-acid chain: Receptor-type tyrosine-protein phosphatase-like N (983 aa).

A signal peptide spans 1–40 (MRRPRRPGGPAGCGGSEGSGGLRLLVCLLLLSGRPGGCSA). Residues 41–137 (ISAHGCLFDR…HPRDRSGSVP (97 aa)) are RESP18 homology domain. Topologically, residues 41–579 (ISAHGCLFDR…RQAHGISPMR (539 aa)) are lumenal. Cysteines 59 and 68 form a disulfide. Residues 118–133 (RIPRLRPPEPHPRDRS) are compositionally biased toward basic and acidic residues. Disordered stretches follow at residues 118–179 (RIPR…SPLS), 293–330 (RARA…SPPQ), and 399–420 (GDTA…ASST). Polar residues predominate over residues 148–158 (SQGNPTGSSPA). Over residues 307-326 (RAEDSSEGHEEEVLGGHGEK) the composition is skewed to basic and acidic residues. Residues S311 and S312 each carry the phosphoserine modification. The interval 453-579 (SPLGQSQPTV…RQAHGISPMR (127 aa)) is sufficient for dimerization of proICA512. Residues N510 and N528 are each glycosylated (N-linked (GlcNAc...) asparagine). The chain crosses the membrane as a helical span at residues 580-604 (SLLLTLVALAGVAGLLVALAVALCM). The segment at 605–736 (RHHSKQRDKE…PNTCATAQGE (132 aa)) is sufficient for dimerization of proICA512. The Cytoplasmic segment spans residues 605 to 983 (RHHSKQRDKE…VNAILKALPQ (379 aa)). The interval 648–684 (RAEGQPEPSRVSSVSSQFSDAAQASPSSHSSTPSWCE) is disordered. The segment covering 652-681 (QPEPSRVSSVSSQFSDAAQASPSSHSSTPS) has biased composition (low complexity). The region spanning 713–973 (LAKEWQALCA…EFALTAVAEE (261 aa)) is the Tyrosine-protein phosphatase domain. K758 is covalently cross-linked (Glycyl lysine isopeptide (Lys-Gly) (interchain with G-Cter in SUMO)).

Belongs to the protein-tyrosine phosphatase family. Receptor class 8 subfamily. In terms of assembly, homodimer; shown for the unprocessed protein (proICA512) in the endoplasmic reticulum and resolved during protein maturation as ICA512-TMF seems to be predominantly monomeric in secretory granules; however, ICA512-CCF interacts with ICA512-TMF disrupting the ICA512-TMF:SNTB2 complex. The isolated lumenal RESP18 homology domain has been shown to form disulfide-linked homooligomers. Interacts (via cytoplasmic domain) with phosphorylated SNTB2; this protects PTPRN against cleavage by CAPN1 to produce ICA512-CCF. Dephosphorylation of SNTB2 upon insulin stimulation disrupts the interaction and results in PTPRN cleavage. Interacts with SNX19. ICA512-CCF interacts with PIAS4; in the nucleus. Interacts with STAT5B (phosphorylated); down-regulated by ICA512-CCF sumoylation; ICA512-CCF prevents STAT5B dephosphorylation; ICA512-CCF mediates interaction of STAT5B with PIAS4. Interacts (via RESP18 homology domain) with insulin and proinsulin. Interacts with PTPRN2, PTPRA and PTPRE. In terms of processing, subject to proteolytic cleavage at multiple sites. Subject to cleavage on a pair of basic residues. Following exocytosis of secretory granules in pancreatic beta-cells ICA512-TMF located in the plasma-membrane is cleaved by mu-type calpain CPN1 to yield ICA512-CCF. Post-translationally, N-glycosylated. O-glycosylated. In terms of processing, sumoylated at two sites including Lys-758. Sumoylation decreases interaction with STAT5. In terms of tissue distribution, detected in pancreas islets. Detected in pancreas alpha, beta and delta cells, and in chromaffin cells in the adrenal medulla. Detected in amygdala, hypothalamus, autonomous nerve fibers and ganglia, especially at synaptic contacts. Detected in pituitary (at protein level). Detected in brain, specifically in cerebral cortex, diencephalon and brain stem.

It localises to the membrane. The protein localises to the cytoplasmic vesicle. Its subcellular location is the secretory vesicle membrane. It is found in the perikaryon. The protein resides in the cell projection. It localises to the axon. The protein localises to the synapse. Its subcellular location is the cell membrane. It is found in the endosome. The protein resides in the nucleus. In terms of biological role, plays a role in vesicle-mediated secretory processes. Required for normal accumulation of secretory vesicles in hippocampus, pituitary and pancreatic islets. Required for the accumulation of normal levels of insulin-containing vesicles and preventing their degradation. Plays a role in insulin secretion in response to glucose stimuli. Required for normal accumulation of the neurotransmitters norepinephrine, dopamine and serotonin in the brain. In females, but not in males, required for normal accumulation and secretion of pituitary hormones, such as luteinizing hormone (LH) and follicle-stimulating hormone (FSH). Required to maintain normal levels of renin expression and renin release. Seems to lack intrinsic enzyme activity. Functionally, ICA512-TMF regulates dynamics and exocytosis of insulin secretory granules (SGs); binding of ICA512-TMF to SNTB2/beta-2-syntrophin is proposed to restrain SGs mobility and exocytosis by tethering them to the actin cytoskeleton depending on UTRN; the function is inhibited by cytoplasmic ICA512-CFF dimerizing with ICA512-TMF and displacing SNTB2. Its function is as follows. ICA512-CCF translocated to the nucleus promotes expression of insulin and other granule-related genes; the function implicates binding to and regulating activity of STAT5B probably by preventing its dephosphorylation and potentially by inducing its sumoylation by recruiting PIAS4. Enhances pancreatic beta-cell proliferation by converging with signaling by STAT5B and STAT3. ICA512-CCF located in the cytoplasm regulates dynamics and exocytosis of insulin secretory granules (SGs) by dimerizing with ICA512-TMF and displacing SNTB2 thus enhancing SGs mobility and exocytosis. This is Receptor-type tyrosine-protein phosphatase-like N (Ptprn) from Rattus norvegicus (Rat).